The following is a 151-amino-acid chain: Transcriptional regulator MraZ (151 aa).

2 SpoVT-AbrB domains span residues Ala5–Glu52 and Ala81–Ala124.

This sequence belongs to the MraZ family. As to quaternary structure, forms oligomers.

It is found in the cytoplasm. Its subcellular location is the nucleoid. This Pseudomonas putida (strain ATCC 700007 / DSM 6899 / JCM 31910 / BCRC 17059 / LMG 24140 / F1) protein is Transcriptional regulator MraZ.